Reading from the N-terminus, the 58-residue chain is Keratin-associated protein 19-6 (58 aa).

The protein belongs to the KRTAP type 19 family. Interacts with hair keratins.

Functionally, in the hair cortex, hair keratin intermediate filaments are embedded in an interfilamentous matrix, consisting of hair keratin-associated proteins (KRTAP), which are essential for the formation of a rigid and resistant hair shaft through their extensive disulfide bond cross-linking with abundant cysteine residues of hair keratins. The matrix proteins include the high-sulfur and high-glycine-tyrosine keratins. This is Keratin-associated protein 19-6 (KRTAP19-6) from Homo sapiens (Human).